The primary structure comprises 162 residues: Phosphopantetheine adenylyltransferase (162 aa).

Substrate is bound at residue Ser-9. Residues 9–10 and His-17 each bind ATP; that span reads SF. Positions 41, 73, and 87 each coordinate substrate. ATP-binding positions include 88-90, Glu-98, and 123-129; these read GLR and YAHLSSS.

It belongs to the bacterial CoaD family. As to quaternary structure, homohexamer. Mg(2+) is required as a cofactor.

Its subcellular location is the cytoplasm. It catalyses the reaction (R)-4'-phosphopantetheine + ATP + H(+) = 3'-dephospho-CoA + diphosphate. The protein operates within cofactor biosynthesis; coenzyme A biosynthesis; CoA from (R)-pantothenate: step 4/5. In terms of biological role, reversibly transfers an adenylyl group from ATP to 4'-phosphopantetheine, yielding dephospho-CoA (dPCoA) and pyrophosphate. In Symbiobacterium thermophilum (strain DSM 24528 / JCM 14929 / IAM 14863 / T), this protein is Phosphopantetheine adenylyltransferase.